Reading from the N-terminus, the 142-residue chain is Small ribosomal subunit protein uS12 (142 aa).

It belongs to the universal ribosomal protein uS12 family. As to quaternary structure, part of the 30S ribosomal subunit.

Functionally, with S4 and S5 plays an important role in translational accuracy. Located at the interface of the 30S and 50S subunits. The sequence is that of Small ribosomal subunit protein uS12 from Methanoregula boonei (strain DSM 21154 / JCM 14090 / 6A8).